A 179-amino-acid polypeptide reads, in one-letter code: Inner membrane-spanning protein YciB (179 aa).

5 consecutive transmembrane segments (helical) span residues 24 to 44 (TATG…YAME), 49 to 69 (AMQK…LVLH), 76 to 96 (WKPT…LWAL), 121 to 141 (VAWI…AAYF), and 151 to 171 (LWGY…ISPH).

This sequence belongs to the YciB family.

The protein localises to the cell inner membrane. Its function is as follows. Plays a role in cell envelope biogenesis, maintenance of cell envelope integrity and membrane homeostasis. This Variovorax paradoxus (strain S110) protein is Inner membrane-spanning protein YciB.